Consider the following 272-residue polypeptide: HTH-type transcriptional repressor AllR (272 aa).

Residues 1–20 (MTEVRRRGRPGQQEPSAQKG) form a disordered region. In terms of domain architecture, HTH iclR-type spans 21 to 83 (AQALERGIAI…SQLGWWHIGL (63 aa)). Positions 43-62 (VSDISLNLDLPLSTTFRLLK) form a DNA-binding region, H-T-H motif. Residues 98 to 267 (VLSVGGPFMR…ARNISTALGL (170 aa)) form the IclR-ED domain. Glyoxylate-binding positions include 154–156 (SGA), Asp-207, Cys-217, and 234–236 (SIS).

Functionally, negative regulator of allantoin and glyoxylate utilization operons. Binds to the gcl promoter and to the allS-allA intergenic region. In Klebsiella pneumoniae, this protein is HTH-type transcriptional repressor AllR (allR).